The chain runs to 193 residues: Flagellar transcriptional regulator FlhC (193 aa).

Zn(2+) contacts are provided by cysteine 138, cysteine 141, cysteine 158, and cysteine 161.

The protein belongs to the FlhC family. As to quaternary structure, heterohexamer composed of two FlhC and four FlhD subunits. Each FlhC binds a FlhD dimer, forming a heterotrimer, and a hexamer assembles by dimerization of two heterotrimers. The cofactor is Zn(2+).

It localises to the cytoplasm. In terms of biological role, functions in complex with FlhD as a master transcriptional regulator that regulates transcription of several flagellar and non-flagellar operons by binding to their promoter region. Activates expression of class 2 flagellar genes, including fliA, which is a flagellum-specific sigma factor that turns on the class 3 genes. Also regulates genes whose products function in a variety of physiological pathways. The polypeptide is Flagellar transcriptional regulator FlhC (Yersinia enterocolitica).